A 537-amino-acid polypeptide reads, in one-letter code: Polyadenylate-binding protein 6 (537 aa).

4 consecutive RRM domains span residues 21-99, 112-188, 202-279, and 304-381; these read GSLY…WSQR, ANLY…KFIN, TNVY…KALK, and SNLY…VAER. Positions 503–537 are disordered; sequence KATTSEENRKEERRLTLSGKLSPEVKVEESGKQLQ. Composition is skewed to basic and acidic residues over residues 506 to 517 and 525 to 537; these read TSEENRKEERRL and PEVK…KQLQ.

It belongs to the polyadenylate-binding protein type-1 family. As to expression, expressed at low levels in leaves and young seedlings.

Its subcellular location is the cytoplasm. The protein localises to the nucleus. Its function is as follows. Binds the poly(A) tail of mRNA. Appears to be an important mediator of the multiple roles of the poly(A) tail in mRNA biogenesis, stability and translation. The polypeptide is Polyadenylate-binding protein 6 (PAB6) (Arabidopsis thaliana (Mouse-ear cress)).